We begin with the raw amino-acid sequence, 445 residues long: Exodeoxyribonuclease 7 large subunit (445 aa).

Belongs to the XseA family. In terms of assembly, heterooligomer composed of large and small subunits.

Its subcellular location is the cytoplasm. The catalysed reaction is Exonucleolytic cleavage in either 5'- to 3'- or 3'- to 5'-direction to yield nucleoside 5'-phosphates.. Its function is as follows. Bidirectionally degrades single-stranded DNA into large acid-insoluble oligonucleotides, which are then degraded further into small acid-soluble oligonucleotides. The protein is Exodeoxyribonuclease 7 large subunit of Xanthomonas axonopodis pv. citri (strain 306).